The chain runs to 4085 residues: Replicase polyprotein 1a (4085 aa).

One can recognise a CoV Nsp1 globular domain in the interval 2-109 (ACNRVTLAVA…EFDVVFGKRG (108 aa)). Residues 113-359 (VTYTDQYLCG…RNSVTDECRL (247 aa)) enclose the CoV Nsp2 N-terminal domain. 4 residues coordinate Zn(2+): Cys246, Cys248, Cys265, and Cys266. A C4 region spans residues 246-266 (CTCGTKSWSVGDWTGFKSSCC). One can recognise a CoV Nsp2 middle domain in the interval 389-775 (YDDIFAESKP…LEAYNAFLDT (387 aa)). In terms of domain architecture, CoV Nsp2 C-terminal spans 773 to 897 (LDTVVSTVKI…LPVAFTKAAG (125 aa)). Residues 898–993 (GKVSFSDDVE…VMISEWPLSV (96 aa)) enclose the Ubiquitin-like 1 domain. Residues 1016-1268 (VNSIFDIETV…DTTPKEEFVV (253 aa)) enclose the Peptidase C16 1 domain. Cys1054 functions as the For PL1-PRO activity in the catalytic mechanism. A C4-type 1; degenerate zinc finger spans residues 1126–1157 (CSCTSGRLEESGAVLFCTPTKKAFPYGTCLNC). Active-site for PL1-PRO activity residues include His1205 and Asp1218. Residues 1269 to 1436 (KEKLNAFLVH…KVKDFVSGLV (168 aa)) form the Macro domain. Positions 1600-1655 (AKVITIKVTEDGVNVHDVTVTTDKSFEQQVGVIADKDKDLSGAVPSDLNTSELLTK) constitute a Ubiquitin-like 2 domain. The Peptidase C16 2 domain occupies 1663-1914 (EFYGFKDAVT…TVKPKPVINQ (252 aa)). Cys1701 serves as the catalytic For PL2-PRO activity. Residues Cys1780, Cys1783, Cys1813, and His1815 each coordinate Zn(2+). The C4-type 2; atypical zinc finger occupies 1780–1815 (CVECDAKFKNSVASINSAIVCASVKRDGVQVGYCVH). Residues His1863 and Asp1868 each act as for PL2-PRO activity in the active site. The HD1 stretch occupies residues 1925–2115 (FGDFLIHNFV…STVGVFLGYK (191 aa)). A helical membrane pass occupies residues 1998-2018 (LLLLIYTLYSVVLLCVRFGPF). The 66-residue stretch at 2005–2070 (LYSVVLLCVR…LDVVWKHITD (66 aa)) folds into the 3Ecto domain. Cystine bridges form between Cys2021-Cys2048 and Cys2039-Cys2045. 2 helical membrane passes run 2068-2088 (ITDPLFSNMQPFIVMVLLLIF) and 2095-2115 (CFLLYFVAQMISTVGVFLGYK). Positions 2144–2234 (SFVRHVLFGC…ITKTNVQPTG (91 aa)) are Y1. Residues 2144–2483 (SFVRHVLFGC…PATSIVAKQG (340 aa)) form the CoV Nsp3 Y domain. His2148, Cys2153, Cys2158, Cys2161, Cys2194, His2197, Cys2201, and Cys2204 together coordinate Zn(2+). Residues 2148–2161 (HVLFGCENPDCIAC) form a ZF1 region. The segment at 2194-2204 (CKKHRFFCVDC) is ZF2. The segment at 2235–2324 (PAYVMIDKVE…LVDSELLSTL (90 aa)) is Y2. Residues 2235–2483 (PAYVMIDKVE…PATSIVAKQG (249 aa)) form a coV-Y region. Positions 2325–2381 (SVDFNGVLHKAYIDVLRNSFGKDLNANMSLAECKRALGLSISDHEFTSAISNAHRCD) are Y3. Positions 2382–2483 (VLLSDLSFNN…PATSIVAKQG (102 aa)) are Y4. The next 6 membrane-spanning stretches (helical) occupy residues 2491-2511 (LTWLWLLCGLVCLIQFYLCFF), 2731-2751 (LWNLVFNILSMFSSSFSVAAM), 2755-2775 (ILLNCALGAFAIFCCFLVTKF), 2782-2802 (LSVGVCTVVVAVLLNNVSYIV), 2809-2829 (MIAYAILYFFATRSLRYAWIW), and 2834-2854 (LIAYISFAPWWLCAWYFLAML). The interval 2491–2854 (LTWLWLLCGL…LCAWYFLAML (364 aa)) is HD2. One can recognise a Nsp4C domain in the interval 2870-2965 (LFEGDKFVGT…PTVSYGSTLQ (96 aa)). The region spanning 2966 to 3267 (AGLRKMAQPS…VKQMFGVNLQ (302 aa)) is the Peptidase C30 domain. Residues His3006 and Cys3109 each act as for 3CL-PRO activity in the active site. 7 helical membrane-spanning segments follow: residues 3281 to 3301 (FAGFFVMFWAELFVYTTTIWV), 3304 to 3324 (GFLTPFMILLVALSLCLTFVV), 3328 to 3348 (VLFLQVFLLPSIIVAAIQNCA), 3367 to 3387 (VMQMDIQGFVNIFICLFVALL), 3401 to 3421 (CTYLFSLIAVLYTALYSYDYV), 3422 to 3442 (SLLVMLLCAISNEWYIGAIIF), and 3467 to 3487 (LLFYMLLGFVSCMYYGLLYWI). The HD3 stretch occupies residues 3281 to 3487 (FAGFFVMFWA…CMYYGLLYWI (207 aa)). Positions 3547–3629 (SKLTDLKCTN…SYFENDSILQ (83 aa)) constitute a RdRp Nsp7 cofactor domain. In terms of domain architecture, RdRp Nsp8 cofactor spans 3630-3824 (SVASSFVGMP…LTCERVVKLQ (195 aa)). The Nsp9 ssRNA-binding domain occupies 3825 to 3933 (NNEIMPGKMK…GYIGATVRLQ (109 aa)). An ExoN/MTase coactivator domain is found at 3934 to 4072 (AGKQTEFVSN…DRTAIQSFDN (139 aa)). The Zn(2+) site is built by Cys4007, Cys4010, His4016, Cys4023, Cys4049, Cys4052, Cys4060, and Cys4062. Zinc fingers lie at residues 4007–4023 (CIYCRAHVAHPTMDGFC) and 4049–4062 (CKVCGCWLNHGCTC).

This sequence belongs to the coronaviruses polyprotein 1ab family. In terms of assembly, 3CL-PRO exists as monomer and homodimer. Eight copies of nsp7 and eight copies of nsp8 assemble to form a heterohexadecamer. Nsp9 is a dimer. Nsp10 forms a dodecamer. Specific enzymatic cleavages in vivo by its own proteases yield mature proteins. 3CL-PRO and PL-PRO proteinases are autocatalytically processed.

It localises to the host membrane. The protein localises to the host cytoplasm. It is found in the host perinuclear region. It carries out the reaction Thiol-dependent hydrolysis of ester, thioester, amide, peptide and isopeptide bonds formed by the C-terminal Gly of ubiquitin (a 76-residue protein attached to proteins as an intracellular targeting signal).. Its function is as follows. The papain-like proteinase 1 (PLP1) and papain-like proteinase 2 (PLP2) are responsible for the cleavages located at the N-terminus of the replicase polyprotein. In addition, PLP2 possesses a deubiquitinating/deISGylating activity and processes both 'Lys-48'- and 'Lys-63'-linked polyubiquitin chains from cellular substrates. PLP2 also antagonizes innate immune induction of type I interferon by blocking the nuclear translocation of host IRF-3. Functionally, responsible for the majority of cleavages as it cleaves the C-terminus of replicase polyprotein at 11 sites. Recognizes substrates containing the core sequence [ILMVF]-Q-|-[SGACN]. Inhibited by the substrate-analog Cbz-Val-Asn-Ser-Thr-Leu-Gln-CMK. Also contains an ADP-ribose-1''-phosphate (ADRP)-binding function. In terms of biological role, nsp7-nsp8 hexadecamer may possibly confer processivity to the polymerase, maybe by binding to dsRNA or by producing primers utilized by the latter. Nsp9 is a ssRNA-binding protein. This Homo sapiens (Human) protein is Replicase polyprotein 1a.